A 395-amino-acid chain; its full sequence is uncharacterized protein (395 aa).

The stretch at 288-318 (VAKGKEIDNAEIEKTIKEYENIEEGIEDIVK) forms a coiled coil.

This is an uncharacterized protein from Ostreid herpesvirus 1 (isolate France) (OsHV-1).